The sequence spans 39 residues: Photosystem II reaction center protein L (39 aa).

Residues Ser18–Phe38 traverse the membrane as a helical segment.

The protein belongs to the PsbL family. In terms of assembly, PSII is composed of 1 copy each of membrane proteins PsbA, PsbB, PsbC, PsbD, PsbE, PsbF, PsbH, PsbI, PsbJ, PsbK, PsbL, PsbM, PsbT, PsbX, PsbY, Psb30/Ycf12, peripheral proteins PsbO, CyanoQ (PsbQ), PsbU, PsbV and a large number of cofactors. It forms dimeric complexes.

It is found in the cellular thylakoid membrane. Functionally, one of the components of the core complex of photosystem II (PSII). PSII is a light-driven water:plastoquinone oxidoreductase that uses light energy to abstract electrons from H(2)O, generating O(2) and a proton gradient subsequently used for ATP formation. It consists of a core antenna complex that captures photons, and an electron transfer chain that converts photonic excitation into a charge separation. This subunit is found at the monomer-monomer interface and is required for correct PSII assembly and/or dimerization. The chain is Photosystem II reaction center protein L from Prochlorococcus marinus (strain MIT 9211).